The following is a 1259-amino-acid chain: MVMMLWYVLPLLLCSPCLLIQIPDEYKGHHVLEPPVITEQSPRRLVVFPTDDISLKCEARGRPQVEFRWTKDGIHFKPKEELGVVVHEAPYSGSFTIEGNNSFAQRFQGIYRCYASNNLGTAMSHEIQLVAEGAPKWPKETVKPVEVEEGESVVLPCNPPPSAAPLRIYWMNSKILHIKQDERVSMGQNGDLYFANVLTSDNHSDYICNAHFPGTRTIIQKEPIDLRVKPTNSMIDRKPRLLFPTNSSSHLVALQGQSLILECIAEGFPTPTIKWLHPSDPMPTDRVIYQNHNKTLQLLNVGEEDDGEYTCLAENSLGSARHAYYVTVEAAPYWLQKPQSHLYGPGETARLDCQVQGRPQPEVTWRINGMSIEKVNKDQKYRIEQGSLILSNVQPSDTMVTQCEARNQHGLLLANAYIYVVQLPARILTKDNQTYMAVEGSTAYLLCKAFGAPVPSVQWLDEEGTTVLQDERFFPYANGHLGIRDLQANDTGRYFCQAANDQNNVTILANLQVKEATQITQGPRSTIEKKGARVTFTCQASFDPSLQASITWRGDGRDLQERGDSDKYFIEDGQLVIKSLDYSDQGDYSCVASTELDEVESRAQLLVVGSPGPVPHLELSDRHLLKQSQVHLSWSPAEDHNSPIEKYDIEFEDKEMAPEKWFSLGKVPGNQTSTTLKLSPYVHYTFRVTAINKYGPGEPSPVSETVVTPEAAPEKNPVDVRGEGNETNNMVITWKPLRWMDWNAPQIQYRVQWRPLGKQETWKEQTVSDPFLVVSNTSTFVPYEIKVQAVNNQGKGPEPQVTIGYSGEDYPQVSPELEDITIFNSSTVLVRWRPVDLAQVKGHLRGYNVTYWWKGSQRKHSKRHVHKSHMVVPANTTSAILSGLRPYSSYHVEVQAFNGRGLGPASEWTFSTPEGVPGHPEALHLECQSDTSLLLHWQPPLSHNGVLTGYLLSYHPLDGESKEQLFFNLSDPELRTHNLTNLNPDLQYRFQLQATTHQGPGEAIVREGGTMALFGKPDFGNISVTAGENYSVVSWVPREGQCNFRFHILFKALPEGKVSPDHQPQPQYVSYNQSSYTQWDLQPDTKYEIHLMREKVLLHHLAVKTNGTGPVRVSTTGSFASEGWFIAFVSAIILLLLILLILCFIKRSKGGKYSVKDKEDTQVDSEARPMKDETFGEYRSLESDNEEKAFGSSQPSLNGDIKPLGSDDSLADYGGSVDVQFNEDGSFIGQYSGKKEKEAAGGNDSSGATSPINPAVALE.

The N-terminal stretch at 1–19 (MVMMLWYVLPLLLCSPCLL) is a signal peptide. The Extracellular segment spans residues 20–1122 (IQIPDEYKGH…VSTTGSFASE (1103 aa)). Ig-like C2-type domains are found at residues 35–128 (PVIT…HEIQ), 138–225 (PKET…EPID), 239–327 (PRLL…YYVT), 332–419 (PYWL…AYIY), 424–506 (PARI…NNVT), and 517–600 (TQIT…DEVE). 2 disulfide bridges follow: C57–C113 and C157–C208. N100, N202, N246, and N293 each carry an N-linked (GlcNAc...) asparagine glycan. Intrachain disulfides connect C263-C311 and C353-C403. 3 N-linked (GlcNAc...) asparagine glycosylation sites follow: N432, N489, and N504. Residues C447 and C496 are joined by a disulfide bond. C538 and C590 form a disulfide bridge. 2 consecutive short sequence motifs (cell attachment site) follow at residues 553–555 (RGD) and 562–564 (RGD). 5 Fibronectin type-III domains span residues 613 to 711 (PVPH…TPEA), 716 to 809 (NPVD…SGED), 811 to 916 (PQVS…PEGV), 919 to 1014 (HPEA…MALF), and 1016 to 1116 (KPDF…VSTT). The N-linked (GlcNAc...) asparagine glycan is linked to N670. Residues 697 to 724 (GEPSPVSETVVTPEAAPEKNPVDVRGEG) form a disordered region. Residues 712 to 724 (APEKNPVDVRGEG) show a composition bias toward basic and acidic residues. N-linked (GlcNAc...) asparagine glycans are attached at residues N725, N776, N824, N848, N875, N968, N978, N1021, N1029, N1072, and N1106. A helical transmembrane segment spans residues 1123–1145 (GWFIAFVSAIILLLLILLILCFI). Topologically, residues 1146-1259 (KRSKGGKYSV…SPINPAVALE (114 aa)) are cytoplasmic. Phosphoserine is present on residues S1165, R1179, S1180, S1183, S1196, S1245, S1246, and S1250. Disordered stretches follow at residues 1182 to 1209 (ESDNEEKAFGSSQPSLNGDIKPLGSDDS) and 1228 to 1259 (IGQYSGKKEKEAAGGNDSSGATSPINPAVALE). The span at 1243–1252 (NDSSGATSPI) shows a compositional bias: polar residues.

The protein belongs to the immunoglobulin superfamily. L1/neurofascin/NgCAM family. As to quaternary structure, interacts with SHTN1; the interaction occurs in axonal growth cones. Interacts with isoform 2 of BSG. In terms of tissue distribution, isoform 2 is predominantly found in the brain, while isoform 1 is found in the peripheral nervous system.

Its subcellular location is the cell membrane. It localises to the cell projection. It is found in the growth cone. In terms of biological role, neural cell adhesion molecule involved in the dynamics of cell adhesion and in the generation of transmembrane signals at tyrosine kinase receptors. During brain development, critical in multiple processes, including neuronal migration, axonal growth and fasciculation, and synaptogenesis. In the mature brain, plays a role in the dynamics of neuronal structure and function, including synaptic plasticity. This chain is Neural cell adhesion molecule L1 (L1cam), found in Rattus norvegicus (Rat).